The primary structure comprises 305 residues: N-acetyl-D-glucosamine kinase (305 aa).

ATP is bound by residues 4–11 and 133–140; these read GFDIGGTK and GFGGGLVF. Residues H157, C178, C180, and C185 each coordinate Zn(2+).

This sequence belongs to the ROK (NagC/XylR) family. NagK subfamily.

The catalysed reaction is N-acetyl-D-glucosamine + ATP = N-acetyl-D-glucosamine 6-phosphate + ADP + H(+). It participates in cell wall biogenesis; peptidoglycan recycling. In terms of biological role, catalyzes the phosphorylation of N-acetyl-D-glucosamine (GlcNAc) derived from cell-wall degradation, yielding GlcNAc-6-P. The polypeptide is N-acetyl-D-glucosamine kinase (Histophilus somni (strain 129Pt) (Haemophilus somnus)).